The sequence spans 370 residues: Cytochrome b (370 aa).

Transmembrane regions (helical) follow at residues 25–45 (FGSMLLTCSALQVLTGFFLAV), 69–90 (WMMQNLHAMGASMFFICIYIHI), 105–125 (WLSGTTLLIMLMATAFFGYVL), and 170–190 (FFALHFILPFGIISFSSLHVM). Heme b-binding residues include histidine 75 and histidine 89. Histidine 174 and histidine 188 together coordinate heme b. Histidine 193 is an a ubiquinone binding site. 4 helical membrane passes run 218-238 (YKDLFMLSVMITLLLTMISFY), 280-300 (LGGALALAMSIMILLTMPFTH), 312-332 (FMQLMFWTFAATFLVITWTAT), and 339-358 (FTMISQVAALIYFLFFISNP).

This sequence belongs to the cytochrome b family. The cytochrome bc1 complex contains 3 respiratory subunits (MT-CYB, CYC1 and UQCRFS1), 2 core proteins (UQCRC1 and UQCRC2) and probably 6 low-molecular weight proteins. The cofactor is heme b.

The protein resides in the mitochondrion inner membrane. In terms of biological role, component of the ubiquinol-cytochrome c reductase complex (complex III or cytochrome b-c1 complex) that is part of the mitochondrial respiratory chain. The b-c1 complex mediates electron transfer from ubiquinol to cytochrome c. Contributes to the generation of a proton gradient across the mitochondrial membrane that is then used for ATP synthesis. The protein is Cytochrome b (MT-CYB) of Corallus hortulanus enydris (Garden tree boa).